Here is a 404-residue protein sequence, read N- to C-terminus: Sorting nexin-5 (404 aa).

Position 2 is an N-acetylalanine (Ala-2). In terms of domain architecture, PX spans Leu-25 to Leu-172. Residues Ser-40–Lys-46, Phe-99–Lys-105, and Glu-113–Met-116 each bind a 1,2-diacyl-sn-glycero-3-phospho-(1D-myo-inositol-4,5-bisphosphate). Positions Asp-169–Val-261 are interaction with DOCK1. The tract at residues Phe-183–Ser-200 is membrane-binding amphipathic helix. Ser-193 bears the Phosphoserine mark. A BAR domain is found at Val-202–Asn-404. Residue Lys-275 is modified to N6-acetyllysine.

Belongs to the sorting nexin family. As to quaternary structure, forms heterodimers with BAR domain-containing sorting nexins SNX1 and SNX2; does not homodimerize. The heterodimers are proposed to self-assemble into helical arrays on the membrane to stabilize and expand local membrane curvature underlying endosomal tubule formation. Thought to be a component of the originally described retromer complex (also called SNX-BAR retromer) which is a pentamer containing the heterotrimeric retromer cargo-selective complex (CSC), also described as vacuolar protein sorting subcomplex (VPS), and a heterodimeric membrane-deforming subcomplex formed between SNX1 or SNX2 and SNX5 or SNX6 (also called SNX-BAR subcomplex); the respective CSC and SNX-BAR subcomplexes associate with low affinity. Interacts with SNX1, SNX2, VPS26A, VPS29, VPS35, DCTN1, DOCK1, MIB1, PIP5K1C. Interacts with HGS; increased by PIP5K1C kinase activity and by PtdIns(3P) and/or PtdIns(3,4)P2.

Its subcellular location is the endosome. It localises to the early endosome. The protein localises to the early endosome membrane. The protein resides in the cell membrane. It is found in the cytoplasmic vesicle membrane. Its subcellular location is the cytoplasm. It localises to the cell projection. The protein localises to the phagocytic cup. The protein resides in the ruffle. Functionally, involved in several stages of intracellular trafficking. Interacts with membranes containing phosphatidylinositol lipids. Acts in part as component of the retromer membrane-deforming SNX-BAR subcomplex. The SNX-BAR retromer mediates retrograde transport of cargo proteins from endosomes to the trans-Golgi network (TGN) and is involved in endosome-to-plasma membrane transport for cargo protein recycling. The SNX-BAR subcomplex functions to deform the donor membrane into a tubular profile called endosome-to-TGN transport carrier (ETC). Does not have in vitro vesicle-to-membrane remodeling activity. Involved in retrograde transport of lysosomal enzyme receptor IGF2R. May function as link between endosomal transport vesicles and dynactin. Plays a role in the internalization of EGFR after EGF stimulation. Involved in EGFR endosomal sorting and degradation; the function involves PIP5K1C and is retromer-independent. Together with PIP5K1C facilitates HGS interaction with ubiquitinated EGFR, which initiates EGFR sorting to intraluminal vesicles (ILVs) of the multivesicular body for subsequent lysosomal degradation. Involved in E-cadherin sorting and degradation; inhibits PIP5K1C-mediated E-cadherin degradation. Plays a role in macropinocytosis. This Rattus norvegicus (Rat) protein is Sorting nexin-5 (Snx5).